Consider the following 507-residue polypeptide: MELIPSFSMETWVLLATSLVLLYIYGTYSYGLFKKLGIPGPRPVPYFGSTMAYHKGIPEFDNQCFKKYGKMWGFYEGRQPMLAITDPDIIKTVLVKECYSVFTNRRIFGPMGIMKYAISLAWDEQWKRIRTLLSPAFTSGKLKEMFPIIGQYGDMLVRNLRKEAEKGNPVNMKDMFGAYSMDVITGTAFGVNIDSLNNPHDPFVEHSKNLLRFRPFDPFILSIILFPFLNPVFEILNITLFPKSTVDFFTKSVKKIKESRLTDKQMNRVDLLQLMINSQNSKEIDNHKALSDIELVAQSTIFIFGGYETTSSTLSFIIYELTTHPHVQQKLQEEIDATFPNKAPPTYDALVQMEYLDMVVNETLRMFPIAGRLERVCKKDVEIHGVTIPKGTTVLVPLFVLHNNPELWPEPEEFRPERFSKNNKDSINPYVYLPFGTGPRNCLGMRFAIMNIKLALVRILQNFSFKPCKETQIPLKLYTQGLTQPEQPVILKVVPRGLGPQVEPDFL.

Heme is bound at residue C442.

Belongs to the cytochrome P450 family. It depends on heme as a cofactor.

The protein localises to the endoplasmic reticulum membrane. Its subcellular location is the microsome membrane. It carries out the reaction an organic molecule + reduced [NADPH--hemoprotein reductase] + O2 = an alcohol + oxidized [NADPH--hemoprotein reductase] + H2O + H(+). Functionally, cytochromes P450 are a group of heme-thiolate monooxygenases. In liver microsomes, this enzyme is involved in an NADPH-dependent electron transport pathway. It oxidizes a variety of structurally unrelated compounds, including steroids, fatty acids, and xenobiotics. The chain is Cytochrome P450 3A28 (CYP3A28) from Bos taurus (Bovine).